We begin with the raw amino-acid sequence, 329 residues long: 4-hydroxythreonine-4-phosphate dehydrogenase (329 aa).

Residues H137 and T138 each contribute to the substrate site. Residues H167, H212, and H267 each coordinate a divalent metal cation. Residues K275, N284, and R293 each coordinate substrate.

This sequence belongs to the PdxA family. In terms of assembly, homodimer. It depends on Zn(2+) as a cofactor. Mg(2+) is required as a cofactor. Requires Co(2+) as cofactor.

It localises to the cytoplasm. It catalyses the reaction 4-(phosphooxy)-L-threonine + NAD(+) = 3-amino-2-oxopropyl phosphate + CO2 + NADH. Its pathway is cofactor biosynthesis; pyridoxine 5'-phosphate biosynthesis; pyridoxine 5'-phosphate from D-erythrose 4-phosphate: step 4/5. Its function is as follows. Catalyzes the NAD(P)-dependent oxidation of 4-(phosphooxy)-L-threonine (HTP) into 2-amino-3-oxo-4-(phosphooxy)butyric acid which spontaneously decarboxylates to form 3-amino-2-oxopropyl phosphate (AHAP). This Stutzerimonas stutzeri (strain A1501) (Pseudomonas stutzeri) protein is 4-hydroxythreonine-4-phosphate dehydrogenase.